A 1286-amino-acid polypeptide reads, in one-letter code: DNA-directed RNA polymerase 147 kDa polypeptide (1286 aa).

It belongs to the poxviridae DNA-directed RNA polymerase 147 kDa subunit family. As to quaternary structure, the DNA-dependent RNA polymerase used for intermediate and late genes expression consists of eight subunits Rpo30/OPG66, Rpo7/OPG90, Rpo22/OPG103, Rpo147/OPG105, Rpo18/OPG119, Rpo19/OPG131, Rpo132/OPG151 and Rpo35/OPG156. The same holoenzyme, with the addition of the transcription-specificity factor OPG109, is used for early gene expression.

Its subcellular location is the virion. It catalyses the reaction RNA(n) + a ribonucleoside 5'-triphosphate = RNA(n+1) + diphosphate. Functionally, part of the DNA-dependent RNA polymerase which catalyzes the transcription of viral DNA into RNA using the four ribonucleoside triphosphates as substrates. Responsible for the transcription of early, intermediate and late genes. DNA-dependent RNA polymerase associates with the early transcription factor (ETF), itself composed of OPG118 and OPG133, thereby allowing the early genes transcription. Late transcription, and probably also intermediate transcription, require newly synthesized RNA polymerase. The polypeptide is DNA-directed RNA polymerase 147 kDa polypeptide (OPG105) (Variola virus (isolate Human/India/Ind3/1967) (VARV)).